Here is a 227-residue protein sequence, read N- to C-terminus: Cytochrome c oxidase subunit 2 (227 aa).

At 1 to 14 (MAYPMQLGFQDATS) the chain is on the mitochondrial intermembrane side. The helical transmembrane segment at 15–45 (PIMEELLHFHDHTLMIVFLISSLVLYIISLM) threads the bilayer. The Mitochondrial matrix segment spans residues 46-59 (LTTKLTHTSTMDAQ). A helical membrane pass occupies residues 60-87 (EVETVWTILPAIILIMIALPSLRILYMM). The Mitochondrial intermembrane portion of the chain corresponds to 88–227 (DEINNPSLTV…YFEKWSASML (140 aa)). Residues His-161, Cys-196, Glu-198, Cys-200, His-204, and Met-207 each coordinate Cu cation. Glu-198 contributes to the Mg(2+) binding site. The residue at position 218 (Tyr-218) is a Phosphotyrosine.

It belongs to the cytochrome c oxidase subunit 2 family. As to quaternary structure, component of the cytochrome c oxidase (complex IV, CIV), a multisubunit enzyme composed of 14 subunits. The complex is composed of a catalytic core of 3 subunits MT-CO1, MT-CO2 and MT-CO3, encoded in the mitochondrial DNA, and 11 supernumerary subunits COX4I, COX5A, COX5B, COX6A, COX6B, COX6C, COX7A, COX7B, COX7C, COX8 and NDUFA4, which are encoded in the nuclear genome. The complex exists as a monomer or a dimer and forms supercomplexes (SCs) in the inner mitochondrial membrane with NADH-ubiquinone oxidoreductase (complex I, CI) and ubiquinol-cytochrome c oxidoreductase (cytochrome b-c1 complex, complex III, CIII), resulting in different assemblies (supercomplex SCI(1)III(2)IV(1) and megacomplex MCI(2)III(2)IV(2)). Found in a complex with TMEM177, COA6, COX18, COX20, SCO1 and SCO2. Interacts with TMEM177 in a COX20-dependent manner. Interacts with COX20. Interacts with COX16. Requires Cu cation as cofactor.

The protein resides in the mitochondrion inner membrane. It carries out the reaction 4 Fe(II)-[cytochrome c] + O2 + 8 H(+)(in) = 4 Fe(III)-[cytochrome c] + 2 H2O + 4 H(+)(out). Component of the cytochrome c oxidase, the last enzyme in the mitochondrial electron transport chain which drives oxidative phosphorylation. The respiratory chain contains 3 multisubunit complexes succinate dehydrogenase (complex II, CII), ubiquinol-cytochrome c oxidoreductase (cytochrome b-c1 complex, complex III, CIII) and cytochrome c oxidase (complex IV, CIV), that cooperate to transfer electrons derived from NADH and succinate to molecular oxygen, creating an electrochemical gradient over the inner membrane that drives transmembrane transport and the ATP synthase. Cytochrome c oxidase is the component of the respiratory chain that catalyzes the reduction of oxygen to water. Electrons originating from reduced cytochrome c in the intermembrane space (IMS) are transferred via the dinuclear copper A center (CU(A)) of subunit 2 and heme A of subunit 1 to the active site in subunit 1, a binuclear center (BNC) formed by heme A3 and copper B (CU(B)). The BNC reduces molecular oxygen to 2 water molecules using 4 electrons from cytochrome c in the IMS and 4 protons from the mitochondrial matrix. The sequence is that of Cytochrome c oxidase subunit 2 (MT-CO2) from Capra hircus (Goat).